A 175-amino-acid chain; its full sequence is Succinate dehydrogenase assembly factor 2, mitochondrial (175 aa).

Positions 42–71 (PFSDPELAHANNSLPSNSEEWPLPEPLDRT) are disordered. Positions 51-60 (ANNSLPSNSE) are enriched in polar residues.

It belongs to the SDHAF2 family. Interacts with the flavoprotein subunit within the SDH catalytic dimer.

Its subcellular location is the mitochondrion matrix. In terms of biological role, plays an essential role in the assembly of succinate dehydrogenase (SDH), an enzyme complex (also referred to as respiratory complex II) that is a component of both the tricarboxylic acid (TCA) cycle and the mitochondrial electron transport chain, and which couples the oxidation of succinate to fumarate with the reduction of ubiquinone (coenzyme Q) to ubiquinol. Required for flavinylation (covalent attachment of FAD) of the flavoprotein subunit of the SDH catalytic dimer. The polypeptide is Succinate dehydrogenase assembly factor 2, mitochondrial (Cryptococcus neoformans var. neoformans serotype D (strain B-3501A) (Filobasidiella neoformans)).